The following is a 75-amino-acid chain: Serine rich endogenous peptide 4 (75 aa).

The signal sequence occupies residues 1–31 (MATKTSNLGHLLLSLFILLLFILSQVGVAQA). The segment at 51–75 (PPPLRGIVKPPIASFHSASPKDKGP) is disordered. The short motif at 61–75 (PIASFHSASPKDKGP) is the SCOOP motif element. A SxS motif essential for MIK2 binding motif is present at residues 67–69 (SAS).

This sequence belongs to the serine rich endogenous peptide (SCOOP) phytocytokine family. As to quaternary structure, interacts with MIK2 (via extracellular leucine-rich repeat domain); this interaction triggers the formation of complex between MIK2 and the BAK1/SERK3 and SERK4 coreceptors, and subsequent BAK1 activation by phosphorylation. Mostly expressed in leaves and seedlings shoots, and, to a lower extent, in roots, stems, siliques, seeds and flowers.

The protein resides in the cell membrane. The protein localises to the secreted. It is found in the extracellular space. Its subcellular location is the apoplast. Functionally, brassicaceae-specific phytocytokine (plant endogenous peptide released into the apoplast) perceived by MIK2 in a BAK1/SERK3 and SERK4 coreceptors-dependent manner, that modulates various physiological and antimicrobial processes including growth prevention and reactive oxygen species (ROS) response regulation. Inhibits root growth. Prevents general growth and development. Exhibits antibacterial effects against Pseudomonas syringae pv. tomato DC3000, Ralstonia solanacearum, Bacillus subtilis and Agrobacterium tumefaciens, thus being an antimicrobial peptide (AMP). In Arabidopsis thaliana (Mouse-ear cress), this protein is Serine rich endogenous peptide 4.